Reading from the N-terminus, the 640-residue chain is ETV5-related protein Ets96B (640 aa).

Positions 315 to 375 (HADSTTTAAQ…HHGHQQAEQQ (61 aa)) are disordered. Positions 321–356 (TAAQQQQQQQEQQQQQQQQQQQQQHQQQLQQAAALH) form a coiled coil. Residues 322 to 355 (AAQQQQQQQEQQQQQQQQQQQQQHQQQLQQAAAL) are compositionally biased toward low complexity. Residues 356–369 (HPHHHHSHHGHHGH) show a composition bias toward basic residues. Residues 498 to 579 (LQLWQFLVAL…NGERYVYRFV (82 aa)) constitute a DNA-binding region (ETS). Positions 609–624 (LAKTPPTSGDSQTQSP) are enriched in polar residues. The disordered stretch occupies residues 609–628 (LAKTPPTSGDSQTQSPRVAK).

The protein belongs to the ETS family. As to expression, in the adult brain, expressed almost exclusively in dopaminergic neurons.

Its subcellular location is the nucleus. Its function is as follows. Required in dopaminergic neurons to regulate expression of genes involved in dopamine signaling. Decreases expression of the dopamine transporter DAT and increases expression of the dopamine transporter Vmat and the tyrosine 3-monooxygenase ple which is involved in dopamine biosynthesis. Also involved in negatively regulating the expression of a group of endoplasmic reticulum proteins, the molecular chaperone Calr and the protein disulfide isomerases CaBP1 and ERp60. This is ETV5-related protein Ets96B from Drosophila melanogaster (Fruit fly).